The chain runs to 481 residues: 2-succinylbenzoate--CoA ligase (481 aa).

Belongs to the ATP-dependent AMP-binding enzyme family. MenE subfamily.

It catalyses the reaction 2-succinylbenzoate + ATP + CoA = 2-succinylbenzoyl-CoA + AMP + diphosphate. The protein operates within quinol/quinone metabolism; 1,4-dihydroxy-2-naphthoate biosynthesis; 1,4-dihydroxy-2-naphthoate from chorismate: step 5/7. It functions in the pathway quinol/quinone metabolism; menaquinone biosynthesis. Converts 2-succinylbenzoate (OSB) to 2-succinylbenzoyl-CoA (OSB-CoA). The protein is 2-succinylbenzoate--CoA ligase of Bacillus mycoides (strain KBAB4) (Bacillus weihenstephanensis).